An 876-amino-acid chain; its full sequence is Phosphoenolpyruvate carboxylase (876 aa).

Residues H138 and K543 contribute to the active site.

This sequence belongs to the PEPCase type 1 family. Requires Mg(2+) as cofactor.

It carries out the reaction oxaloacetate + phosphate = phosphoenolpyruvate + hydrogencarbonate. Forms oxaloacetate, a four-carbon dicarboxylic acid source for the tricarboxylic acid cycle. This is Phosphoenolpyruvate carboxylase from Pseudomonas fluorescens (strain Pf0-1).